We begin with the raw amino-acid sequence, 477 residues long: MYVLHVCSELFPLLKTGGLADVVGAMPSAQIAQGANVRVLVPGFPAICAGLPDSDEVATLDTFAGRVTLRYGVYRGVGVYLIDAPHLYQRPGSPYHDQWQNAYGDNHLRFALLGWIAAELACNCDPFWRPQVVHAHDWHAGLACAYLAARGNPARSVFTVHNLAYQGLFNARHLDELALPHHFFQIYGLEFHGQISFMKAGLYYADHVTTVSPTYAQEITHPEFAYGMEGLLQWRAREGTLSGILNGVDDTIWNPASDALIARTYRRETLRDKAENKLHLQTAMGLEVNADKPLFAVVSRLTDQKGLDLLLAALPTLLEGGAQLALLGAGDAQLQEAFLAVAAEHPGQVGVQIGYHEAFSHRIMAGADVIVVPSRFEPCGLTQLYGLKYGSLPLVRHTGGLADTVNDCALENLADGSATGFVFHDANAADLARAIRRALVLWGRPTLWRYVQRQAMAQSFGWDLAAEHYLALYRRLL.

K15 contributes to the ADP-alpha-D-glucose binding site.

It belongs to the glycosyltransferase 1 family. Bacterial/plant glycogen synthase subfamily.

The catalysed reaction is [(1-&gt;4)-alpha-D-glucosyl](n) + ADP-alpha-D-glucose = [(1-&gt;4)-alpha-D-glucosyl](n+1) + ADP + H(+). It functions in the pathway glycan biosynthesis; glycogen biosynthesis. Functionally, synthesizes alpha-1,4-glucan chains using ADP-glucose. In Edwardsiella ictaluri (strain 93-146), this protein is Glycogen synthase.